The sequence spans 283 residues: Protein FAM78A (283 aa).

This sequence belongs to the FAM78 family.

The protein is Protein FAM78A (FAM78A) of Homo sapiens (Human).